The primary structure comprises 642 residues: Threonine--tRNA ligase (642 aa).

The region spanning 1–61 is the TGS domain; sequence MPIITLPDGS…TADSELAIIT (61 aa). The catalytic stretch occupies residues 243–534; sequence DHRKIGKQLD…LIEEYAGKFP (292 aa). The Zn(2+) site is built by Cys-334, His-385, and His-511.

Belongs to the class-II aminoacyl-tRNA synthetase family. In terms of assembly, homodimer. Zn(2+) is required as a cofactor.

The protein resides in the cytoplasm. It carries out the reaction tRNA(Thr) + L-threonine + ATP = L-threonyl-tRNA(Thr) + AMP + diphosphate + H(+). Functionally, catalyzes the attachment of threonine to tRNA(Thr) in a two-step reaction: L-threonine is first activated by ATP to form Thr-AMP and then transferred to the acceptor end of tRNA(Thr). Also edits incorrectly charged L-seryl-tRNA(Thr). The sequence is that of Threonine--tRNA ligase from Shewanella frigidimarina (strain NCIMB 400).